The primary structure comprises 162 residues: Proepiregulin (162 aa).

An N-terminal signal peptide occupies residues Met1–Ala22. Positions Val23–Gln55 are excised as a propeptide. The N-linked (GlcNAc...) asparagine glycan is linked to Asn40. The region spanning Leu57 to Glu97 is the EGF-like domain. Intrachain disulfides connect Cys61–Cys74, Cys69–Cys85, and Cys87–Cys96. Positions Thr102 to Val162 are cleaved as a propeptide — removed in mature form. A helical transmembrane segment spans residues Ala113 to Phe133.

Interacts with EGFR and ERBB4.

It is found in the secreted. It localises to the extracellular space. The protein resides in the cell membrane. Its function is as follows. Ligand of the EGF receptor/EGFR and ERBB4. Stimulates EGFR and ERBB4 tyrosine phosphorylation. Contributes to inflammation, wound healing, tissue repair, and oocyte maturation by regulating angiogenesis and vascular remodeling and by stimulating cell proliferation. The chain is Proepiregulin (Ereg) from Rattus norvegicus (Rat).